The primary structure comprises 187 residues: Ribosome maturation factor RimM (187 aa).

The 74-residue stretch at 96-169 (EDEFFYADLE…KLVIDPTAAG (74 aa)) folds into the PRC barrel domain.

Belongs to the RimM family. In terms of assembly, binds ribosomal protein uS19.

The protein localises to the cytoplasm. Functionally, an accessory protein needed during the final step in the assembly of 30S ribosomal subunit, possibly for assembly of the head region. Essential for efficient processing of 16S rRNA. May be needed both before and after RbfA during the maturation of 16S rRNA. It has affinity for free ribosomal 30S subunits but not for 70S ribosomes. This Sinorhizobium medicae (strain WSM419) (Ensifer medicae) protein is Ribosome maturation factor RimM.